The sequence spans 173 residues: Ribosome maturation factor RimM (173 aa).

One can recognise a PRC barrel domain in the interval 78-157; it reads EEEFYLADLI…VLVVPPEEVE (80 aa). The disordered stretch occupies residues 152–173; the sequence is PPEEVEAQEPPEKDAGGDEPSP.

The protein belongs to the RimM family. Binds ribosomal protein uS19.

It is found in the cytoplasm. Its function is as follows. An accessory protein needed during the final step in the assembly of 30S ribosomal subunit, possibly for assembly of the head region. Essential for efficient processing of 16S rRNA. May be needed both before and after RbfA during the maturation of 16S rRNA. It has affinity for free ribosomal 30S subunits but not for 70S ribosomes. This chain is Ribosome maturation factor RimM, found in Beijerinckia indica subsp. indica (strain ATCC 9039 / DSM 1715 / NCIMB 8712).